Here is a 318-residue protein sequence, read N- to C-terminus: Deacetoxycephalosporin C hydroxylase (318 aa).

Residues 158–271 (DADPVLRLRY…RTSSVFFLRP (114 aa)) form the Fe2OG dioxygenase domain.

The protein belongs to the iron/ascorbate-dependent oxidoreductase family. Monomer. Requires Fe cation as cofactor.

The catalysed reaction is deacetoxycephalosporin C + 2-oxoglutarate + O2 = deacetylcephalosporin C + succinate + CO2. The protein operates within antibiotic biosynthesis; cephalosporin C biosynthesis. Hydroxylation of desacetoxicephalosporin C in 3'position to form deacetylcephalosporin C. The polypeptide is Deacetoxycephalosporin C hydroxylase (cefF) (Streptomyces clavuligerus).